The following is a 245-amino-acid chain: Biosynthetic peptidoglycan transglycosylase (245 aa).

The helical transmembrane segment at 13 to 35 (VGLARWIVYAGSVFAGAWLATQL) threads the bilayer.

This sequence belongs to the glycosyltransferase 51 family.

The protein localises to the cell inner membrane. The enzyme catalyses [GlcNAc-(1-&gt;4)-Mur2Ac(oyl-L-Ala-gamma-D-Glu-L-Lys-D-Ala-D-Ala)](n)-di-trans,octa-cis-undecaprenyl diphosphate + beta-D-GlcNAc-(1-&gt;4)-Mur2Ac(oyl-L-Ala-gamma-D-Glu-L-Lys-D-Ala-D-Ala)-di-trans,octa-cis-undecaprenyl diphosphate = [GlcNAc-(1-&gt;4)-Mur2Ac(oyl-L-Ala-gamma-D-Glu-L-Lys-D-Ala-D-Ala)](n+1)-di-trans,octa-cis-undecaprenyl diphosphate + di-trans,octa-cis-undecaprenyl diphosphate + H(+). Its pathway is cell wall biogenesis; peptidoglycan biosynthesis. In terms of biological role, peptidoglycan polymerase that catalyzes glycan chain elongation from lipid-linked precursors. The chain is Biosynthetic peptidoglycan transglycosylase from Burkholderia vietnamiensis (strain G4 / LMG 22486) (Burkholderia cepacia (strain R1808)).